A 154-amino-acid polypeptide reads, in one-letter code: Large ribosomal subunit protein uL15 (154 aa).

The span at 1 to 13 (MKLHELKPAEGSR) shows a compositional bias: basic and acidic residues. Residues 1 to 52 (MKLHELKPAEGSRKNRKRVGRGPGGTDKTAGRGHKGQKSRSGAGKGSFFEGG) are disordered.

It belongs to the universal ribosomal protein uL15 family. Part of the 50S ribosomal subunit.

Functionally, binds to the 23S rRNA. The polypeptide is Large ribosomal subunit protein uL15 (Deinococcus deserti (strain DSM 17065 / CIP 109153 / LMG 22923 / VCD115)).